The sequence spans 360 residues: C-X-C chemokine receptor type 2 (360 aa).

At 1-48 the chain is on the extracellular side; it reads MEDFNMESDSFEDFWKGEDLSNYSYSSTLPPFLLDAAPCEPESLEINK. Asparagine 22 carries an N-linked (GlcNAc...) asparagine glycan. The chain crosses the membrane as a helical span at residues 49–75; sequence YFVVIIYALVFLLSLLGNSLVMLVILY. Residues 76-84 are Cytoplasmic-facing; it reads SRVGRSVTD. A helical membrane pass occupies residues 85-105; it reads VYLLNLALADLLFALTLPIWA. At 106-120 the chain is on the extracellular side; sequence ASKVNGWIFGTFLCK. Cysteine 119 and cysteine 196 form a disulfide bridge. Residues 121-142 form a helical membrane-spanning segment; the sequence is VVSLLKEVNFYSGILLLACISV. Residues 143–163 lie on the Cytoplasmic side of the membrane; sequence DRYLAIVHATRTLTQKRYLVK. A helical transmembrane segment spans residues 164–183; sequence FICLSIWGLSLLLALPVLLF. Over 184–208 the chain is Extracellular; it reads RRTVYSSNVSPACYEDMGNNTANWR. Residues 209–231 form a helical membrane-spanning segment; it reads MLLRILPQSFGFIVPLLIMLFCY. At 232 to 251 the chain is on the cytoplasmic side; that stretch reads GFTLRTLFKAHMGQKHRAMR. A helical membrane pass occupies residues 252–273; it reads VIFAVVLIFLLCWLPYNLVLLA. Residues 274-294 lie on the Extracellular side of the membrane; the sequence is DTLMRTQVIQETCERRNHIDR. The chain crosses the membrane as a helical span at residues 295 to 315; the sequence is ALDATEILGILHSCLNPLIYA. Residues 316-360 are Cytoplasmic-facing; the sequence is FIGQKFRHGLLKILAIHGLISKDSLPKDSRPSFVGSSSGHTSTTL. Residues serine 347, serine 351, serine 352, and serine 353 each carry the phosphoserine modification.

The protein belongs to the G-protein coupled receptor 1 family. Interacts with IL8. Interacts with GNAI2. In terms of processing, phosphorylated upon ligand binding; which is required for desensitization. (Microbial infection) Proteolytically cleaved by Staphylococcus aureus staphopain A/SspP. This cleavage inhibits CXCR2-dependent neutrophil activation and chemotaxis.

Its subcellular location is the cell membrane. Functionally, receptor for interleukin-8 which is a powerful neutrophil chemotactic factor. Binding of IL-8 to the receptor causes activation of neutrophils. This response is mediated via a G-protein that activates a phosphatidylinositol-calcium second messenger system. Binds to IL-8 with high affinity. Also binds with high affinity to CXCL3, GRO/MGSA and NAP-2. This is C-X-C chemokine receptor type 2 (CXCR2) from Homo sapiens (Human).